The sequence spans 847 residues: Glucans biosynthesis glucosyltransferase H (847 aa).

Residues 1 to 138 lie on the Cytoplasmic side of the membrane; that stretch reads MNKTTEYIDA…KWRTVGTIRR (138 aa). Residues 139-156 traverse the membrane as a helical segment; that stretch reads YILLILTLAQTVVATWYM. At 157–193 the chain is on the periplasmic side; that stretch reads KTILPYQGWALINPMDMVGQDIWVSFMQLLPYMLQTG. A helical membrane pass occupies residues 194–216; it reads ILILFAVLFCWVSAGFWTALMGF. Topologically, residues 217 to 511 are cytoplasmic; it reads LQLLIGRDKY…LVKGMHPVHR (295 aa). The chain crosses the membrane as a helical span at residues 512-534; it reads AVFLTGVMSYLSAPLWFMFLALS. Topologically, residues 535–567 are periplasmic; it reads TALQVVHALTEPQYFLQPRQLFPVWPQWRPELA. A helical membrane pass occupies residues 568 to 590; that stretch reads IALFASTMVLLFLPKLLSIMLIW. The Cytoplasmic segment spans residues 591–602; it reads CKGTKEYGGFWR. Residues 603–625 traverse the membrane as a helical segment; that stretch reads VTLSLLLEVLFSVLLAPVRMLFH. Residues 626-679 lie on the Periplasmic side of the membrane; the sequence is TVFVVSAFLGWEVVWNSPQRDDDSTPWGEAFMRHGSQLLLGLVWAVGMAWLDLR. Residues 680–702 traverse the membrane as a helical segment; sequence FLFWLAPIVFSLILSPFVSVISS. The Cytoplasmic segment spans residues 703–847; the sequence is RSTVGLRTKR…ALQGRTSSAG (145 aa).

This sequence belongs to the glycosyltransferase 2 family. OpgH subfamily.

The protein localises to the cell inner membrane. It functions in the pathway glycan metabolism; osmoregulated periplasmic glucan (OPG) biosynthesis. Functionally, involved in the biosynthesis of osmoregulated periplasmic glucans (OPGs). This is Glucans biosynthesis glucosyltransferase H from Salmonella typhi.